Here is a 172-residue protein sequence, read N- to C-terminus: Light-harvesting complex-like protein OHP2, chloroplastic (172 aa).

A chloroplast-targeting transit peptide spans 1 to 43 (MSVASPIQCIRILNPSSSSSSSTASSSFRFSTTTKPCVFIIRC). Over 44 to 135 (SQTEGPLRRP…QPKNEISNGR (92 aa)) the chain is Stromal. A disordered region spans residues 45 to 90 (QTEGPLRRPSAPPTLREPQKPVPPSQPSSSPPPSPPPQKAVAVDGK). Residues 64–82 (KPVPPSQPSSSPPPSPPPQ) show a composition bias toward pro residues. Residues 136–156 (WAMFGFAVGMLTEYATGSDLV) traverse the membrane as a helical segment. Topologically, residues 157–172 (DQVKILLSNFGILDLE) are lumenal.

This sequence belongs to the ELIP/psbS family. In terms of assembly, component of a high molecular weight complex containing OHP1, OHP2 and HCF244, and PSII core proteins D1/D2, HCF136 and HCF173. Forms a trimeric complex with OHP1 and HCF244 that mutually stabilizes each subunit.

It is found in the plastid. It localises to the chloroplast thylakoid membrane. In terms of biological role, may play a photoprotective role within PSI in response to light stress. Forms a trimeric complex with OHP1 and HCF244 that is required to promote PSII core subunit assembly. The trimeric complex forms a transient PSII reaction center-like complex with PsbA, PsbD, PsbE, PsbF and PsbI subunits in thylakoids for early assembly of PSII as well as PSII repair. The trimeric complex is required for the recruitment of ribosomes to the psbA mRNA during PSII biogenesis and repair. Forms a heterodimer with OHP1 that binds chlorophylls and carotenoids, and that may function in the delivery of pigments to the PsbA subunit of PSII. The sequence is that of Light-harvesting complex-like protein OHP2, chloroplastic from Arabidopsis thaliana (Mouse-ear cress).